The following is a 459-amino-acid chain: Antizyme inhibitor 2 (459 aa).

The tract at residues 117–140 is necessary for polyamine uptake stimulation; it reads QVAQIKYAAKHGVRLLSFDNEVEL.

Belongs to the Orn/Lys/Arg decarboxylase class-II family. ODC antizyme inhibitor subfamily. Monomer. Interacts with OAZ1, OAZ2 and OAZ3; this interaction disrupts the interaction between the antizyme and ODC1. Does not form a heterodimer with ODC1. Post-translationally, ubiquitinated, leading to its proteasomal degradation; a process that is reduced in presence of antizymes. May also be degraded through the lysosomal degradative pathway in a proteasomal-independent manner. Expressed in the medulla and chromaffin cells of the adrenal gland. Expressed in the Langerhans islets of the pancreas. Expressed in the inner part of the seminiferous tubules and in spermatozoa located in the lumen of the epididymis of the testis. Expressed in the cortex, hippocampus and cerebellum of the brain. Expressed in normal and neoplastic mast cells (MC) (at protein level). Expressed in testis, pancreas and brain. Expressed throughout the differentiation process from spermatids to spermatozoa in the inner part of the seminiferous tubules. Expressed in the kidney: expressed in the superficial (Cs) and the deep layer (Cd) of the cortex region and in the outer stripe (OS), inner stripe (IS) and the inner medulla papilla (IM) of the medulla region.

Its subcellular location is the nucleus. The protein resides in the cytoplasm. It is found in the perinuclear region. It localises to the membrane. The protein localises to the cytoplasmic vesicle. Its subcellular location is the endoplasmic reticulum-Golgi intermediate compartment. The protein resides in the golgi apparatus. It is found in the cis-Golgi network. It localises to the trans-Golgi network. The protein localises to the cytoplasmic granule. Its subcellular location is the cell projection. The protein resides in the axon. It is found in the dendrite. It localises to the perikaryon. Functionally, antizyme inhibitor (AZI) protein that positively regulates ornithine decarboxylase (ODC) activity and polyamine uptake. AZI is an enzymatically inactive ODC homolog that counteracts the negative effect of ODC antizymes (AZs) OAZ1, OAZ2 and OAZ3 on ODC activity by competing with ODC for antizyme-binding. Inhibits antizyme-dependent ODC degradation and releases ODC monomers from their inactive complex with antizymes, leading to formation of the catalytically active ODC homodimer and restoring polyamine production. Participates in the morphological integrity of the trans-Golgi network (TGN) and functions as a regulator of intracellular secretory vesicle trafficking. This is Antizyme inhibitor 2 (Azin2) from Mus musculus (Mouse).